A 794-amino-acid polypeptide reads, in one-letter code: MASEDGEMPSQFEGIDPEQLTESQMQQYMMEMQRQGLLDSNMEGGQYEEGYEEGQEGEGYGEEYGDQDYDGNQNEYDSQQDSQQQGHDQVNEMHQDRYDRRVNSEISGNYEADDETLRKIRRDLLDNINLERRHRDLQPVYIDLTTNNISQYYSEYLVNNEHNQDFYENAKVRYNNLGECELCHITAKFEPDADITKEYIYDYFMEIGYLFLESEEEKRIILNPANNHIGIGVFFDEIQIVVVLILSEKVLCIQKISQPEQNKIEIRGKMLDENFGIYAIRIMNVDDQKKDIKGVGPEFIEYTRSTQEWMASFELELYNQDRMAIEYYTRVSPDSIPYKKKQSKNEKLTYKHLQLRLRTPFQIYPDPKYAAEDEKERIRKEQEILAHEEQERKEREENDAKRLKQSRKDYGDGQYDDDEHGQDDFNSQSDISDKDKHHDSMHAEQEQNQQAAQQQQDTISNKEIRQELEMAITEAQRQHDEFMLQNHKLQEEIKLLKNKNDGFVDRSNETAMNEHKYLNTLAHVHQIRLDLKQTQTRYNQMSQELQKKLEQKQKKCNEIKYAFLELKREVAKKAANSRTDKPIPEQQINEWEKAELQKSKELQELRLQILRLRNAYVKNQKILKKKEELAEGLHLIDFEQLKIENQTLNEKIEERNEELHKLKKKNTTTIQILTHTREKLGFVQGENGELNSQNVRKDQELDDMRKQLTQQKKTKDKLRSVNLTLKQQTGIVNSEELGQDYRDLRTRVSKLEEEKKRLEQKLRSMHEAIKTANQISTQNMQSQNNSLKKPYQPY.

Disordered regions lie at residues 1–105 (MASE…VNSE) and 386–458 (AHEE…QQDT). Residues 24–35 (QMQQYMMEMQRQ) are compositionally biased toward low complexity. Positions 49–69 (EGYEEGQEGEGYGEEYGDQDY) are enriched in acidic residues. Basic and acidic residues-rich tracts occupy residues 89-103 (QVNE…RRVN), 386-411 (AHEE…KDYG), and 431-445 (ISDK…HAEQ). The span at 446 to 456 (EQNQQAAQQQQ) shows a compositional bias: low complexity. 2 coiled-coil regions span residues 461–613 (NKEI…LRLR) and 638–775 (FEQL…ANQI). Residues 774 to 787 (QISTQNMQSQNNSL) are compositionally biased toward polar residues. The disordered stretch occupies residues 774–794 (QISTQNMQSQNNSLKKPYQPY).

It belongs to the CFAP184 family. In terms of assembly, forms a complex with CFAP263; the interaction is required for functional activity in cilia.

The protein localises to the cell projection. The protein resides in the cilium. In terms of biological role, in complex with CFAP263, acts as a regulator of ciliary beating that connects radial spoke 3 (RS3) to the inner dynein arm (IDA) and the nexin-dynein regulatory complex (N-DRC). The complex is positioned parallel to N-DRC and forms a connection between the arch at the base of RS3, the IDA tail and N-DRC. The chain is Cilia- and flagella-associated protein 184 (CFAP184) from Tetrahymena thermophila (strain SB210).